A 416-amino-acid chain; its full sequence is Enterobactin exporter EntS (416 aa).

Topologically, residues 1-21 (MNKQSWLLNLSLLKTHPAFRA) are cytoplasmic. The helical transmembrane segment at 22-42 (VFLARFISIVSLGLLGVAVPV) threads the bilayer. At 43–55 (QIQMMTHSTWQVG) the chain is on the periplasmic side. A helical transmembrane segment spans residues 56 to 76 (LSVTLTGGAMFVGLMVGGVLA). Residues 77-83 (DRYERKK) lie on the Cytoplasmic side of the membrane. Residues 84-104 (VILLARGTCGIGFIGLCLNAL) form a helical membrane-spanning segment. Topologically, residues 105–109 (LPEPS) are periplasmic. A helical transmembrane segment spans residues 110 to 130 (LLAIYLLGLWDGFFASLGVTA). The Cytoplasmic segment spans residues 131 to 156 (LLAATPALVGRENLMQAGAITMLTVR). A helical membrane pass occupies residues 157–177 (LGSVISPMIGGLLLATGGVAW). A topological domain (periplasmic) is located at residue asparagine 178. A helical transmembrane segment spans residues 179 to 199 (YGLAAAGTFITLLPLLSLPAL). Residues 200-218 (PPPPQPREHPLKSLLAGFR) are Cytoplasmic-facing. The helical transmembrane segment at 219 to 239 (FLLASPLVGGIALLGGLLTMA) threads the bilayer. The Periplasmic portion of the chain corresponds to 240-256 (SAVRVLYPALADNWQMS). The chain crosses the membrane as a helical span at residues 257–277 (AAQIGFLYAAIPLGAAIGALT). Topologically, residues 278 to 287 (SGKLAHSVRP) are cytoplasmic. Residues 288–307 (GLLMLLSTLGAFLAISLFGL) form a helical membrane-spanning segment. Residues 308–313 (MPMWIL) are Periplasmic-facing. A helical transmembrane segment spans residues 314–336 (GVVCLALFGWLSAVSSLLQYTML). The Cytoplasmic segment spans residues 337 to 356 (QTQTPEAMLGRINGLWTAQN). A helical transmembrane segment spans residues 357-377 (VTGDAIGAALLGGLGAMMTPV). A topological domain (periplasmic) is located at residue alanine 378. Residues 379–399 (SASASGFGLLIIGVLLLLVLV) form a helical membrane-spanning segment. Residues 400-416 (ELRRFRQTPPQVTASDS) are Cytoplasmic-facing.

It belongs to the major facilitator superfamily. EntS (TC 2.A.1.38) family.

The protein localises to the cell inner membrane. Functionally, component of an export pathway for enterobactin. The protein is Enterobactin exporter EntS of Escherichia coli O45:K1 (strain S88 / ExPEC).